The sequence spans 333 residues: Dipeptide transport system permease protein DppB (333 aa).

Transmembrane regions (helical) follow at residues 10 to 30, 99 to 119, 130 to 150, 197 to 217, 256 to 276, and 300 to 320; these read LLLI…IHLI, IELT…AGIV, YLSM…LALM, SIKH…AIIA, LIPV…GAIL, and PVIQ…NLFV. The ABC transmembrane type-1 domain occupies 95 to 324; that stretch reads LAATIELTIF…LINLFVDLLY (230 aa).

This sequence belongs to the binding-protein-dependent transport system permease family. OppBC subfamily.

It is found in the cell membrane. Functionally, probably part of the ABC transporter Dpp involved in dipeptide transport. Responsible for the translocation of the substrate across the membrane. This chain is Dipeptide transport system permease protein DppB (dppB), found in Alkalihalophilus pseudofirmus (strain ATCC BAA-2126 / JCM 17055 / OF4) (Bacillus pseudofirmus).